The sequence spans 170 residues: Lipoprotein signal peptidase (170 aa).

5 helical membrane-spanning segments follow: residues 13 to 33 (IFIS…VTYV), 72 to 92 (LFFL…SLKE), 96 to 113 (VSRF…GNII), 116 to 136 (LFRP…IFGL), and 142 to 162 (FNFA…YDLF). Active-site residues include aspartate 124 and aspartate 146.

The protein belongs to the peptidase A8 family.

The protein localises to the cell inner membrane. The enzyme catalyses Release of signal peptides from bacterial membrane prolipoproteins. Hydrolyzes -Xaa-Yaa-Zaa-|-(S,diacylglyceryl)Cys-, in which Xaa is hydrophobic (preferably Leu), and Yaa (Ala or Ser) and Zaa (Gly or Ala) have small, neutral side chains.. It participates in protein modification; lipoprotein biosynthesis (signal peptide cleavage). Its function is as follows. This protein specifically catalyzes the removal of signal peptides from prolipoproteins. The protein is Lipoprotein signal peptidase of Borrelia duttonii (strain Ly).